Reading from the N-terminus, the 448-residue chain is UDP-N-acetylglucosamine--dolichyl-phosphate N-acetylglucosaminephosphotransferase (448 aa).

The chain crosses the membrane as a helical span at residues 24-44 (ALVAAVGFGIAGYLATDMLIP). UDP-N-acetyl-alpha-D-glucosamine is bound by residues 58–60 (KDL) and E70. 2 helical membrane-spanning segments follow: residues 72–92 (IGAI…PFIF) and 129–149 (YLSA…DDLF). Position 156 (K156) interacts with dolichyl phosphate. Helical transmembrane passes span 157 to 177 (FFLP…DFGV) and 202 to 222 (YVYM…LAGV). 210–218 (IFCPNSINI) lines the dolichyl phosphate pocket. N217 contacts Mg(2+). Residue N223 participates in UDP-N-acetyl-alpha-D-glucosamine binding. 4 helical membrane-spanning segments follow: residues 231–251 (IVLA…GPLA), 256–276 (HRFS…LWKW), 283–303 (VFVG…VGIL), and 309–329 (TMLL…PQLF). D287 is a Mg(2+) binding site. 336–338 (RHR) contacts UDP-N-acetyl-alpha-D-glucosamine. Transmembrane regions (helical) follow at residues 387–407 (EIIS…FGPM) and 419–439 (LQFC…AIIF).

It belongs to the glycosyltransferase 4 family. Requires Mg(2+) as cofactor.

The protein localises to the endoplasmic reticulum membrane. The enzyme catalyses a di-trans,poly-cis-dolichyl phosphate + UDP-N-acetyl-alpha-D-glucosamine = an N-acetyl-alpha-D-glucosaminyl-diphospho-di-trans,poly-cis-dolichol + UMP. The protein operates within protein modification; protein glycosylation. Inhibited by natural nucleoside antibiotic tunicamycin, which acts as a structural analog and competitor of UDP-GlcNAc. Functionally, UDP-N-acetylglucosamine--dolichyl-phosphate N-acetylglucosaminephosphotransferase that operates in the biosynthetic pathway of dolichol-linked oligosaccharides, the glycan precursors employed in protein asparagine (N)-glycosylation. The assembly of dolichol-linked oligosaccharides begins on the cytosolic side of the endoplasmic reticulum membrane and finishes in its lumen. The sequential addition of sugars to dolichol pyrophosphate produces dolichol-linked oligosaccharides containing fourteen sugars, including two GlcNAcs, nine mannoses and three glucoses. Once assembled, the oligosaccharide is transferred from the lipid to nascent proteins by oligosaccharyltransferases. Catalyzes the initial step of dolichol-linked oligosaccharide biosynthesis, transfering GlcNAc-1-P from cytosolic UDP-GlcNAc onto the carrier lipid dolichyl phosphate (P-dolichol), yielding GlcNAc-P-P-dolichol embedded in the cytoplasmic leaflet of the endoplasmic reticulum membrane. This Saccharomyces cerevisiae (strain ATCC 204508 / S288c) (Baker's yeast) protein is UDP-N-acetylglucosamine--dolichyl-phosphate N-acetylglucosaminephosphotransferase (ALG7).